Here is a 368-residue protein sequence, read N- to C-terminus: Ferrochelatase (368 aa).

Fe cation is bound by residues H209 and E290. A disordered region spans residues 347–368; it reads REEQEQQAHISREEARRLGADQ.

The protein belongs to the ferrochelatase family.

Its subcellular location is the cytoplasm. It catalyses the reaction heme b + 2 H(+) = protoporphyrin IX + Fe(2+). The protein operates within porphyrin-containing compound metabolism; protoheme biosynthesis; protoheme from protoporphyrin-IX: step 1/1. Catalyzes the ferrous insertion into protoporphyrin IX. This is Ferrochelatase from Janthinobacterium sp. (strain Marseille) (Minibacterium massiliensis).